A 184-amino-acid chain; its full sequence is Ribosome-recycling factor (184 aa).

This sequence belongs to the RRF family.

It localises to the cytoplasm. Functionally, responsible for the release of ribosomes from messenger RNA at the termination of protein biosynthesis. May increase the efficiency of translation by recycling ribosomes from one round of translation to another. The protein is Ribosome-recycling factor of Borrelia turicatae (strain 91E135).